Reading from the N-terminus, the 609-residue chain is Putative cell agglutination protein pfl4 (609 aa).

The first 21 residues, 1–21 (MLFLRFFIFTFFTSIFTVVVS), serve as a signal peptide directing secretion. The N-linked (GlcNAc...) asparagine glycan is linked to Asn75. Residues 75–391 (NHSTIYTTIN…ASTVVVIPTA (317 aa)) form a 9 X 36 AA approximate tandem repeats region. A run of 9 repeats spans residues 77–110 (STIY…EPTA), 111–146 (GTVT…EPLA), 147–182 (GTVT…EPAV), 183–218 (GTVT…EPTA), 219–254 (GTVT…EPAV), 255–290 (GTVT…EPAV), 291–325 (GTVT…QPTG), 326–361 (GTVT…LPGP), and 362–391 (STIY…IPTA). N-linked (GlcNAc...) asparagine glycosylation occurs at Asn161. One can recognise a PA14 domain in the interval 427–589 (FTQPAYFGSS…NSYNPTSYAY (163 aa)).

Belongs to the mam3/map4 family.

The protein resides in the cell surface. In terms of biological role, may be involved in agglutination during conjugation or other aspects of colony formation. Induces flocculation when overexpressed. The protein is Putative cell agglutination protein pfl4 of Schizosaccharomyces pombe (strain 972 / ATCC 24843) (Fission yeast).